We begin with the raw amino-acid sequence, 114 residues long: Large ribosomal subunit protein bL19 (114 aa).

This sequence belongs to the bacterial ribosomal protein bL19 family.

Functionally, this protein is located at the 30S-50S ribosomal subunit interface and may play a role in the structure and function of the aminoacyl-tRNA binding site. This Thermobifida fusca (strain YX) protein is Large ribosomal subunit protein bL19.